The sequence spans 232 residues: Orotate phosphoribosyltransferase (232 aa).

5-phospho-alpha-D-ribose 1-diphosphate-binding positions include R107, K108, K111, and 133–141 (EDLTTDGGS). An orotate-binding site is contributed by T137.

This sequence belongs to the purine/pyrimidine phosphoribosyltransferase family. PyrE subfamily. In terms of assembly, homodimer. It depends on Mg(2+) as a cofactor.

The catalysed reaction is orotidine 5'-phosphate + diphosphate = orotate + 5-phospho-alpha-D-ribose 1-diphosphate. The protein operates within pyrimidine metabolism; UMP biosynthesis via de novo pathway; UMP from orotate: step 1/2. Functionally, catalyzes the transfer of a ribosyl phosphate group from 5-phosphoribose 1-diphosphate to orotate, leading to the formation of orotidine monophosphate (OMP). The polypeptide is Orotate phosphoribosyltransferase (Cereibacter sphaeroides (strain ATCC 17025 / ATH 2.4.3) (Rhodobacter sphaeroides)).